The primary structure comprises 333 residues: Anthranilate phosphoribosyltransferase (333 aa).

5-phospho-alpha-D-ribose 1-diphosphate is bound by residues G81, 84–85 (GD), T89, 91–94 (NIST), 109–117 (KHGNRSVSS), and A121. G81 provides a ligand contact to anthranilate. S93 contacts Mg(2+). N112 contacts anthranilate. Residue R167 participates in anthranilate binding. Residues D225 and E226 each coordinate Mg(2+).

This sequence belongs to the anthranilate phosphoribosyltransferase family. Homodimer. Mg(2+) serves as cofactor.

The enzyme catalyses N-(5-phospho-beta-D-ribosyl)anthranilate + diphosphate = 5-phospho-alpha-D-ribose 1-diphosphate + anthranilate. Its pathway is amino-acid biosynthesis; L-tryptophan biosynthesis; L-tryptophan from chorismate: step 2/5. In terms of biological role, catalyzes the transfer of the phosphoribosyl group of 5-phosphorylribose-1-pyrophosphate (PRPP) to anthranilate to yield N-(5'-phosphoribosyl)-anthranilate (PRA). This chain is Anthranilate phosphoribosyltransferase, found in Pasteurella multocida (strain Pm70).